We begin with the raw amino-acid sequence, 189 residues long: Cytochrome bo(3) ubiquinol oxidase subunit 3 (189 aa).

Residues 1-10 (MIKETMRNNK) lie on the Cytoplasmic side of the membrane. A helical membrane pass occupies residues 11–31 (LFGLWIYLMSDCIIFAVLFAV). Over 32 to 52 (YAIISSNFSTNLINHKIFNLS) the chain is Extracellular. The chain crosses the membrane as a helical span at residues 53–73 (YVFLETLILLLSSLSSGMLTI). Over 74–81 (QKNKNNIK) the chain is Cytoplasmic. The helical transmembrane segment at 82–102 (IIYFYLLLTFFLGLSFLLMEV) threads the bilayer. Over 103–122 (NEFYKLILENCSPSQHAFFS) the chain is Extracellular. A helical membrane pass occupies residues 123–143 (IFFTIVGVHGIHVFFGLIFIL). Over 144–161 (SILYQLFYLGITNTIRIR) the chain is Cytoplasmic. The chain crosses the membrane as a helical span at residues 162-182 (ILCFSLFWHFLDIIWICVFTF). The Extracellular segment spans residues 183 to 189 (VYLNGVI).

This sequence belongs to the cytochrome c oxidase subunit 3 family. As to quaternary structure, heterooctamer of two A chains, two B chains, two C chains and two D chains.

The protein localises to the cell membrane. In terms of biological role, cytochrome bo(3) ubiquinol terminal oxidase is the component of the aerobic respiratory chain of E.coli that predominates when cells are grown at high aeration. Has proton pump activity across the membrane in addition to electron transfer, pumping 2 protons/electron. The protein is Cytochrome bo(3) ubiquinol oxidase subunit 3 (cyoC) of Buchnera aphidicola subsp. Schizaphis graminum (strain Sg).